Consider the following 662-residue polypeptide: DNA ligase (662 aa).

NAD(+) contacts are provided by residues 32–36, 81–82, and E112; these read DAEYD and SL. Residue K114 is the N6-AMP-lysine intermediate of the active site. NAD(+)-binding residues include R135, E170, K286, and K310. The Zn(2+) site is built by C402, C405, C420, and C425. One can recognise a BRCT domain in the interval 583-662; that stretch reads PKGGPLTGST…AELHAMLRGE (80 aa).

It belongs to the NAD-dependent DNA ligase family. LigA subfamily. Requires Mg(2+) as cofactor. It depends on Mn(2+) as a cofactor.

The catalysed reaction is NAD(+) + (deoxyribonucleotide)n-3'-hydroxyl + 5'-phospho-(deoxyribonucleotide)m = (deoxyribonucleotide)n+m + AMP + beta-nicotinamide D-nucleotide.. Functionally, DNA ligase that catalyzes the formation of phosphodiester linkages between 5'-phosphoryl and 3'-hydroxyl groups in double-stranded DNA using NAD as a coenzyme and as the energy source for the reaction. It is essential for DNA replication and repair of damaged DNA. In Solibacter usitatus (strain Ellin6076), this protein is DNA ligase.